An 843-amino-acid polypeptide reads, in one-letter code: Aminopeptidase N (843 aa).

Substrate contacts are provided by residues E120 and G252 to N256. H288 is a Zn(2+) binding site. Catalysis depends on E289, which acts as the Proton acceptor. Zn(2+) contacts are provided by H292 and E311.

Belongs to the peptidase M1 family. As to quaternary structure, monomer. It depends on Zn(2+) as a cofactor.

The protein localises to the cytoplasm. It catalyses the reaction Release of an N-terminal amino acid, Xaa-|-Yaa- from a peptide, amide or arylamide. Xaa is preferably Ala, but may be most amino acids including Pro (slow action). When a terminal hydrophobic residue is followed by a prolyl residue, the two may be released as an intact Xaa-Pro dipeptide.. Functionally, aminopeptidase with broad substrate specificity to several peptides. This chain is Aminopeptidase N (pepN), found in Lactobacillus delbrueckii subsp. lactis.